The sequence spans 287 residues: uncharacterized protein (287 aa).

One can recognise a THUMP domain in the interval 133–239; the sequence is CEVGKTKKMT…KNIIGISIVQ (107 aa). Residues 257–287 form a disordered region; that stretch reads ENTKSIPNDSKLDNFDRDKNQIINDKAEHAE. Basic and acidic residues predominate over residues 266–287; the sequence is SKLDNFDRDKNQIINDKAEHAE.

This is an uncharacterized protein from Schizosaccharomyces pombe (strain 972 / ATCC 24843) (Fission yeast).